Consider the following 336-residue polypeptide: Calcium-gated potassium channel MthK (336 aa).

At 1-20 (MVLVIEIIRKHLPRVLKVPA) the chain is on the cytoplasmic side. Residues 21–41 (TRILLLVLAVIIYGTAGFHFI) form a helical membrane-spanning segment. The Extracellular portion of the chain corresponds to 42–48 (EGESWTV). The helical; Pore-forming intramembrane region spans 49–58 (SLYWTFVTIA). Residues 59–64 (TVGYGD) constitute an intramembrane region (pore-forming). The short motif at 59–64 (TVGYGD) is the Selectivity filter element. Residues 65-69 (YSPST) lie on the Extracellular side of the membrane. Residues 70–95 (PLGMYFTVTLIVLGIGTFAVAVERLL) form a helical membrane-spanning segment. Topologically, residues 96–106 (EFLINREQMKL) are cytoplasmic. Residues 115 to 230 (SRHVVICGWS…RMAGADQVIS (116 aa)) form the RCK N-terminal domain. Residues Asp184, Glu210, and Glu212 each contribute to the Ca(2+) site. One can recognise an RCK C-terminal domain in the interval 252-336 (VQDVLAEEST…IERLKNYISA (85 aa)).

As to quaternary structure, homotetramer.

The protein localises to the cell membrane. Its function is as follows. Calcium-gated potassium channel. The protein is Calcium-gated potassium channel MthK (mthK) of Methanothermobacter thermautotrophicus (strain ATCC 29096 / DSM 1053 / JCM 10044 / NBRC 100330 / Delta H) (Methanobacterium thermoautotrophicum).